We begin with the raw amino-acid sequence, 195 residues long: Imidazoleglycerol-phosphate dehydratase (195 aa).

It belongs to the imidazoleglycerol-phosphate dehydratase family.

The protein localises to the cytoplasm. It catalyses the reaction D-erythro-1-(imidazol-4-yl)glycerol 3-phosphate = 3-(imidazol-4-yl)-2-oxopropyl phosphate + H2O. It participates in amino-acid biosynthesis; L-histidine biosynthesis; L-histidine from 5-phospho-alpha-D-ribose 1-diphosphate: step 6/9. This Ruegeria pomeroyi (strain ATCC 700808 / DSM 15171 / DSS-3) (Silicibacter pomeroyi) protein is Imidazoleglycerol-phosphate dehydratase.